An 84-amino-acid polypeptide reads, in one-letter code: uncharacterized protein (84 aa).

This is an uncharacterized protein from Bacillus subtilis (strain 168).